The chain runs to 230 residues: Tol-Pal system protein TolQ (230 aa).

The next 3 helical transmembrane spans lie at 16-36 (LVKLIMLILIGFSIASWAIII), 139-159 (YIGLFGTVWGIMHAFIALGAV), and 171-191 (IAEALIATAIGLFAAIPAVMA).

The protein belongs to the ExbB/TolQ family. The Tol-Pal system is composed of five core proteins: the inner membrane proteins TolA, TolQ and TolR, the periplasmic protein TolB and the outer membrane protein Pal. They form a network linking the inner and outer membranes and the peptidoglycan layer.

It is found in the cell inner membrane. Functionally, part of the Tol-Pal system, which plays a role in outer membrane invagination during cell division and is important for maintaining outer membrane integrity. Required, with TolR, for the proton motive force-dependent activation of TolA and for TolA-Pal interaction. This Escherichia coli O157:H7 protein is Tol-Pal system protein TolQ.